The sequence spans 2067 residues: Lipoxygenase homology domain-containing protein 1 (2067 aa).

15 PLAT domains span residues 43-160, 172-287, 296-412, 425-540, 553-673, 684-803, 814-934, 969-1087, 1100-1225, 1254-1372, 1421-1539, 1552-1667, 1679-1797, 1810-1931, and 1948-2064; these read RVYE…RDLL, NKYE…RDIL, ITYI…RQLY, FPWS…REMT, ARYH…RELL, FRYH…VELY, VHYE…RELL, TTFS…RDLF, VPYE…RELV, VLYS…RLFY, IPYY…RVFD, VLYE…CEMC, TSYT…RDFA, TTYE…VFEV, and VKYE…RDLF.

The protein resides in the cell projection. It localises to the stereocilium. In terms of biological role, involved in hearing. Required for normal function of hair cells in the inner ear. This is Lipoxygenase homology domain-containing protein 1 (LOXHD1) from Homo sapiens (Human).